The following is a 508-amino-acid chain: MDLMDMDAINDLHFSGHSSLTNTPTSDEDYGCTWNHWSPIVNWDTFTGAPDDFHHLMDTIIEDRTTVLEQLSPSITTTTTTTTTTDEEEEEMETTTTTTTTAIKTHEVGDDSKGLKLVHLLMAGAEALTGSTKNRDLARVILIRLKELVSQHANGSNMERLAAHFTEALHGLLEGAGGAHNNHHHHNNNKHYLTTNGPHDNQNDTLAAFQLLQDMSPYVKFGHFTANQAIIEAVAHERRVHVIDYDIMEGVQWASLIQSLASNNNGPHLRITALSRTGTGRRSIATVQETGRRLTSFAASLGQPFSFHHCRLDSDETFRPSALKLVRGEALVFNCMLNLPHLSYRAPESVASFLNGAKTLNPKLVTLVEEEVGSVIGGFVERFMDSLHHYSAVFDSLEAGFPMQNRARTLVERVFFGPRIAGSLGRIYRTGGEEERRSWGEWLGEVGFRGVPVSFANHCQAKLLLGLFNDGYRVEEVGVGSNKLVLDWKSRRLLSASLWTCSSSDSDL.

The segment at 75-98 (ITTTTTTTTTTDEEEEEMETTTTT) is disordered. The GRAS domain maps to 108-500 (VGDDSKGLKL…RRLLSASLWT (393 aa)). A leucine repeat I (LRI) region spans residues 115-190 (LKLVHLLMAG…NNHHHHNNNK (76 aa)). The segment at 209-273 (FQLLQDMSPY…NNGPHLRITA (65 aa)) is VHIID. A VHIID motif is present at residues 240–244 (VHVID). The interval 289-321 (ETGRRLTSFAASLGQPFSFHHCRLDSDETFRPS) is leucine repeat II (LRII). A PFYRE region spans residues 331-422 (LVFNCMLNLP…RVFFGPRIAG (92 aa)). The SAW stretch occupies residues 425-500 (GRIYRTGGEE…RRLLSASLWT (76 aa)).

This sequence belongs to the GRAS family. In terms of assembly, interacts with RAM1. Interacts with IPN2 and RAD1. Expressed in roots, shoots and leaves.

The protein localises to the nucleus membrane. It is found in the endoplasmic reticulum. Transcriptional regulator essential for Nod-factor-induced gene expression. Acts downstream of calcium spiking and DMI3, a calcium/calmodulin-dependent protein kinase (CCaMK). Transcription factor involved in the control of strigolactone biosynthesis in roots through the activation of the beta-carotene isomerase D27, which participates in a pathway leading to biosynthesis of strigolactones. The polypeptide is Protein NODULATION SIGNALING PATHWAY 2 (Medicago truncatula (Barrel medic)).